Here is a 191-residue protein sequence, read N- to C-terminus: Orotate phosphoribosyltransferase (191 aa).

114–122 (EDVVTTGKS) is a 5-phospho-alpha-D-ribose 1-diphosphate binding site. Orotate-binding residues include T118 and R146.

The protein belongs to the purine/pyrimidine phosphoribosyltransferase family. PyrE subfamily. In terms of assembly, homodimer. Mg(2+) is required as a cofactor.

It carries out the reaction orotidine 5'-phosphate + diphosphate = orotate + 5-phospho-alpha-D-ribose 1-diphosphate. It functions in the pathway pyrimidine metabolism; UMP biosynthesis via de novo pathway; UMP from orotate: step 1/2. Functionally, catalyzes the transfer of a ribosyl phosphate group from 5-phosphoribose 1-diphosphate to orotate, leading to the formation of orotidine monophosphate (OMP). The sequence is that of Orotate phosphoribosyltransferase from Clostridium botulinum (strain Kyoto / Type A2).